The chain runs to 132 residues: Riboflavin kinase (132 aa).

Gly-13–Ser-18 serves as a coordination point for CDP. Mg(2+) is bound by residues Thr-40 and Asn-42. 2 residues coordinate FMN: Thr-98 and Glu-106. Val-111–Arg-114 contacts CDP.

It belongs to the archaeal riboflavin kinase family. It depends on Mg(2+) as a cofactor.

The enzyme catalyses riboflavin + CTP = CDP + FMN + H(+). Its pathway is cofactor biosynthesis; FMN biosynthesis; FMN from riboflavin (CTP route): step 1/1. Catalyzes the CTP-dependent phosphorylation of riboflavin (vitamin B2) to form flavin mononucleotide (FMN). This is Riboflavin kinase from Aeropyrum pernix (strain ATCC 700893 / DSM 11879 / JCM 9820 / NBRC 100138 / K1).